A 140-amino-acid polypeptide reads, in one-letter code: Early nodulin-like protein 22 (140 aa).

Positions 1–28 (MAQSSGHVSYVAVTVPIAIVMTVLCLFL) are cleaved as a signal peptide. The 100-residue stretch at 39–138 (TTYIVGGDDG…GLKMAIKALA (100 aa)) folds into the Phytocyanin domain. N-linked (GlcNAc...) asparagine glycosylation is present at Asn85. Cys92 and Cys126 are disulfide-bonded.

The protein belongs to the early nodulin-like (ENODL) family.

In terms of biological role, may act as a carbohydrate transporter. In Arabidopsis thaliana (Mouse-ear cress), this protein is Early nodulin-like protein 22.